Here is a 451-residue protein sequence, read N- to C-terminus: DNA polymerase IV (451 aa).

Residues 5–187 form the UmuC domain; it reads VIHVDMDAFF…LPVGRLWGVG (183 aa). Mg(2+) is bound by residues Asp-9 and Asp-104. Residue Glu-105 is part of the active site.

This sequence belongs to the DNA polymerase type-Y family. As to quaternary structure, monomer. It depends on Mg(2+) as a cofactor.

The protein localises to the cytoplasm. It catalyses the reaction DNA(n) + a 2'-deoxyribonucleoside 5'-triphosphate = DNA(n+1) + diphosphate. In terms of biological role, poorly processive, error-prone DNA polymerase involved in untargeted mutagenesis. Copies undamaged DNA at stalled replication forks, which arise in vivo from mismatched or misaligned primer ends. These misaligned primers can be extended by PolIV. Exhibits no 3'-5' exonuclease (proofreading) activity. May be involved in translesional synthesis, in conjunction with the beta clamp from PolIII. The sequence is that of DNA polymerase IV from Corynebacterium diphtheriae (strain ATCC 700971 / NCTC 13129 / Biotype gravis).